A 290-amino-acid polypeptide reads, in one-letter code: MGKGLALDIGGTKIAAAVVTESGMLIGRQQIATPRGGAGQLAAALETLIAPYRHQVDFIAVASTGIISGGRLTALNPANLGGLADFPLYDCIRSISDLPCVLLNDGQAAAWAEYQALGDKNDNMMFVTVSTGVGGGIILNKKLLVGQRGLAGHIGHTLSDPHGVLCGCGRRGCVESVASGTAIGAETLGWKQPVSAATVFDMAQQGDAQAGKVINRSAAAIAQMLADMKMALDLEVVILGGSVGLAVGYLERVVAAQKTLPGIYRVPVQEAHHRQDSGLLGAALWARASL.

Residues 6-13 (ALDIGGTK) and 132-139 (GVGGGIIL) contribute to the ATP site. Zn(2+)-binding residues include His-156, Cys-166, Cys-168, and Cys-173.

Belongs to the ROK (NagC/XylR) family. NanK subfamily. In terms of assembly, homodimer.

It carries out the reaction an N-acyl-D-mannosamine + ATP = an N-acyl-D-mannosamine 6-phosphate + ADP + H(+). The protein operates within amino-sugar metabolism; N-acetylneuraminate degradation; D-fructose 6-phosphate from N-acetylneuraminate: step 2/5. In terms of biological role, catalyzes the phosphorylation of N-acetylmannosamine (ManNAc) to ManNAc-6-P. The sequence is that of N-acetylmannosamine kinase from Yersinia pseudotuberculosis serotype O:3 (strain YPIII).